The primary structure comprises 424 residues: Endoglucanase (424 aa).

A signal peptide spans 1–19; it reads MHRCMPLVAASMAALMLAG. Cysteine 20 carries the N-palmitoyl cysteine lipid modification. Cysteine 20 is lipidated: S-diacylglycerol cysteine. The propeptide occupies 20 to 43; it reads CGGGDGDTTLSTAAATDTTTLKTA. Glutamate 247 (proton donor) is an active-site residue. The Nucleophile role is filled by glutamate 359.

This sequence belongs to the glycosyl hydrolase 5 (cellulase A) family.

It is found in the cell membrane. The catalysed reaction is Endohydrolysis of (1-&gt;4)-beta-D-glucosidic linkages in cellulose, lichenin and cereal beta-D-glucans.. The chain is Endoglucanase (egl) from Ralstonia nicotianae (strain ATCC BAA-1114 / GMI1000) (Ralstonia solanacearum).